A 184-amino-acid polypeptide reads, in one-letter code: UPF0397 protein SAOUHSC_03020 (184 aa).

5 consecutive transmembrane segments (helical) span residues 11–31 (VVAI…VVIP), 44–64 (AFLA…TGLV), 77–97 (AWWS…WIGL), 116–136 (IGQI…LDIL), and 148–168 (QGVI…TILL).

Belongs to the UPF0397 family.

The protein localises to the cell membrane. This Staphylococcus aureus (strain NCTC 8325 / PS 47) protein is UPF0397 protein SAOUHSC_03020.